The chain runs to 79 residues: EAMZP30-47 protein (79 aa).

Low complexity predominate over residues 1–12; the sequence is HAASPRGRPQQR. The disordered stretch occupies residues 1 to 47; it reads HAASPRGRPQQRSSRHGAEGPDTTRRGSCCSSSSSCCRPSTPRHPHN. The segment covering 16 to 25 has biased composition (basic and acidic residues); it reads HGAEGPDTTR. The span at 28 to 37 shows a compositional bias: low complexity; the sequence is SCCSSSSSCC.

It is found in the membrane. Its subcellular location is the cell membrane. The protein localises to the cytoplasmic vesicle. The protein resides in the secretory vesicle. It localises to the rhoptry. This is EAMZP30-47 protein (CMC17) from Eimeria acervulina (Coccidian parasite).